A 154-amino-acid polypeptide reads, in one-letter code: Large ribosomal subunit protein uL30 (154 aa).

The disordered stretch occupies residues 114-146; sequence PTLRLHPPRGGHDGVKHPVKEGGQLGKHDTEGI. Positions 123-144 are enriched in basic and acidic residues; that stretch reads GGHDGVKHPVKEGGQLGKHDTE.

It belongs to the universal ribosomal protein uL30 family. Part of the 50S ribosomal subunit. Binds 5S rRNA.

Functionally, this is one of 5 proteins that mediate the attachment of the 5S rRNA onto the large ribosomal subunit, stabilizing the orientation of adjacent RNA domains. The chain is Large ribosomal subunit protein uL30 from Haloarcula marismortui (strain ATCC 43049 / DSM 3752 / JCM 8966 / VKM B-1809) (Halobacterium marismortui).